The following is an 85-amino-acid chain: Small ribosomal subunit protein bS16 (85 aa).

Belongs to the bacterial ribosomal protein bS16 family.

In Clostridium novyi (strain NT), this protein is Small ribosomal subunit protein bS16.